Reading from the N-terminus, the 244-residue chain is Anti-H(O) lectin 1 (244 aa).

Asparagine 113 and asparagine 117 each carry an N-linked (GlcNAc...) asparagine glycan. Residues glutamate 127 and aspartate 129 each coordinate Mn(2+). Residues aspartate 129, tyrosine 131, asparagine 137, and aspartate 142 each contribute to the Ca(2+) site. Positions 142 and 145 each coordinate Mn(2+).

It belongs to the leguminous lectin family. As to quaternary structure, homotetramer.

Its function is as follows. Di-N-acetylchitobiose-binding anti-H(O) lectin. The protein is Anti-H(O) lectin 1 of Cytisophyllum sessilifolium (Sessile-leaved cytisus).